The following is a 93-amino-acid chain: YcgL domain-containing protein VV1058 (93 aa).

The 84-residue stretch at 1-84 folds into the YcgL domain; the sequence is MLCSIYKSSK…PPENLLQQHK (84 aa). Residues 74 to 93 are disordered; that stretch reads PPPENLLQQHKERKAQQKND.

This chain is YcgL domain-containing protein VV1058, found in Vibrio vulnificus (strain YJ016).